The following is a 109-amino-acid chain: Iron-sulfur cluster assembly protein CyaY (109 aa).

Belongs to the frataxin family.

Its function is as follows. Involved in iron-sulfur (Fe-S) cluster assembly. May act as a regulator of Fe-S biogenesis. This Burkholderia lata (strain ATCC 17760 / DSM 23089 / LMG 22485 / NCIMB 9086 / R18194 / 383) protein is Iron-sulfur cluster assembly protein CyaY.